We begin with the raw amino-acid sequence, 63 residues long: Small ribosomal subunit protein eS17 (63 aa).

The protein belongs to the eukaryotic ribosomal protein eS17 family.

The chain is Small ribosomal subunit protein eS17 from Methanosphaerula palustris (strain ATCC BAA-1556 / DSM 19958 / E1-9c).